The chain runs to 612 residues: GPI mannosyltransferase 3 (612 aa).

2 helical membrane-spanning segments follow: residues 92–112 (LLAI…AGLM) and 145–165 (VIYA…YFTI). Residue N188 is glycosylated (N-linked (GlcNAc...) asparagine). 3 consecutive transmembrane segments (helical) span residues 192 to 212 (IALL…RTFI), 254 to 274 (RPSN…NLLL), and 288 to 308 (ILVV…YFYN). A glycan (N-linked (GlcNAc...) asparagine) is linked at N321. The helical transmembrane segment at 339 to 359 (LLQSLPIMLGYSLPLFIYGLF) threads the bilayer. N-linked (GlcNAc...) asparagine glycosylation occurs at N361. The next 3 membrane-spanning stretches (helical) occupy residues 371 to 391 (FGAL…YSYL), 398 to 418 (FIYP…LKLA), and 429 to 449 (EYVW…TTFQ). 3 N-linked (GlcNAc...) asparagine glycosylation sites follow: N508, N526, and N550.

Belongs to the glycosyltransferase 22 family. PIGB subfamily.

It is found in the endoplasmic reticulum membrane. The protein operates within glycolipid biosynthesis; glycosylphosphatidylinositol-anchor biosynthesis. In terms of biological role, mannosyltransferase involved in glycosylphosphatidylinositol-anchor biosynthesis. Transfers the third mannose to Man2-GlcN-acyl-PI during GPI precursor assembly. The chain is GPI mannosyltransferase 3 (GPI10) from Candida glabrata (strain ATCC 2001 / BCRC 20586 / JCM 3761 / NBRC 0622 / NRRL Y-65 / CBS 138) (Yeast).